The primary structure comprises 85 residues: Dynein light chain 1, cytoplasmic (85 aa).

The protein belongs to the dynein light chain family. In terms of assembly, homodimer. Cytoplasmic dynein consists of two catalytic heavy chains (HCs) and a number of non-catalytic subunits which present intermediate chains (ICs), light intermediate chains (LICs) and light chains (LCs). Component of the nuclear pore complex (NPC). NPC constitutes the exclusive means of nucleocytoplasmic transport. NPCs allow the passive diffusion of ions and small molecules and the active, nuclear transport receptor-mediated bidirectional transport of macromolecules such as proteins, RNAs, ribonucleoparticles (RNPs), and ribosomal subunits across the nuclear envelope. Due to its 8-fold rotational symmetry, all subunits are present with 8 copies or multiples thereof.

The protein resides in the cytoplasm. Its subcellular location is the cytoskeleton. It is found in the nucleus. The protein localises to the nuclear pore complex. In terms of biological role, acts as one of several non-catalytic accessory components of the cytoplasmic dynein complex that are thought to be involved in linking dynein to cargos and to adapter proteins that regulate dynein function. Cytoplasmic dynein 1 acts as a motor for the intracellular retrograde motility of vesicles and organelles along microtubules. May play a role in changing or maintaining the spatial distribution of cytoskeletal structures. Also a component of the nuclear pore complex. In Schizosaccharomyces pombe (strain 972 / ATCC 24843) (Fission yeast), this protein is Dynein light chain 1, cytoplasmic (dlc2).